We begin with the raw amino-acid sequence, 218 residues long: Hypoxanthine-guanine phosphoribosyltransferase (218 aa).

At Ala-2 the chain carries N-acetylalanine. Lys-69 is a binding site for GMP. Lys-103 bears the N6-acetyllysine mark. A Glycyl lysine isopeptide (Lys-Gly) (interchain with G-Cter in SUMO1); alternate cross-link involves residue Lys-115. Residue Lys-115 forms a Glycyl lysine isopeptide (Lys-Gly) (interchain with G-Cter in SUMO2); alternate linkage. Residues 134–142 (EDIIDTGKT), Lys-166, 186–188 (KFV), and Asp-194 each bind GMP. Catalysis depends on Asp-138, which acts as the Proton acceptor. At Thr-142 the chain carries Phosphothreonine. Residue Asp-194 coordinates Mg(2+).

This sequence belongs to the purine/pyrimidine phosphoribosyltransferase family. Homotetramer. Requires Mg(2+) as cofactor.

It localises to the cytoplasm. It carries out the reaction IMP + diphosphate = hypoxanthine + 5-phospho-alpha-D-ribose 1-diphosphate. The catalysed reaction is GMP + diphosphate = guanine + 5-phospho-alpha-D-ribose 1-diphosphate. It functions in the pathway purine metabolism; IMP biosynthesis via salvage pathway; IMP from hypoxanthine: step 1/1. Its function is as follows. Converts guanine to guanosine monophosphate, and hypoxanthine to inosine monophosphate. Transfers the 5-phosphoribosyl group from 5-phosphoribosylpyrophosphate onto the purine. Plays a central role in the generation of purine nucleotides through the purine salvage pathway. In Pan troglodytes (Chimpanzee), this protein is Hypoxanthine-guanine phosphoribosyltransferase (HPRT1).